Here is an 875-residue protein sequence, read N- to C-terminus: Alanine--tRNA ligase (875 aa).

Residues H565, H569, C666, and H670 each coordinate Zn(2+).

Belongs to the class-II aminoacyl-tRNA synthetase family. Requires Zn(2+) as cofactor.

It is found in the cytoplasm. It catalyses the reaction tRNA(Ala) + L-alanine + ATP = L-alanyl-tRNA(Ala) + AMP + diphosphate. In terms of biological role, catalyzes the attachment of alanine to tRNA(Ala) in a two-step reaction: alanine is first activated by ATP to form Ala-AMP and then transferred to the acceptor end of tRNA(Ala). Also edits incorrectly charged Ser-tRNA(Ala) and Gly-tRNA(Ala) via its editing domain. The sequence is that of Alanine--tRNA ligase from Leptothrix cholodnii (strain ATCC 51168 / LMG 8142 / SP-6) (Leptothrix discophora (strain SP-6)).